The primary structure comprises 1210 residues: ATPase family AAA domain-containing protein At1g05910 (1210 aa).

The span at 1–11 (MHPKRSSQGDG) shows a compositional bias: polar residues. 2 disordered regions span residues 1 to 32 (MHPK…LHGR) and 63 to 291 (LHKG…RTDD). Acidic residues predominate over residues 97-109 (DYTDSSGAEDEDM). Basic and acidic residues predominate over residues 130–146 (SRKDMDAELAPRREGLR). Residues 167–226 (DTSEEKDGQDETENGNELDDADDGENEVEAEDEGNGEDEGDGEDEGEEDGDDDEEGDEEQ) show a composition bias toward acidic residues. The span at 227–244 (EGRKRYDLRNRAEVRRMP) shows a compositional bias: basic and acidic residues. Residues 276 to 286 (GGSRPHKRHRF) show a composition bias toward basic residues. 422-429 (GPPGTGKT) contributes to the ATP binding site. A disordered region spans residues 856 to 883 (LNGKPDGPQPLPELPKVPKEPTGPKPAE). The region spanning 897–1000 (RLRMCLRDVC…DVVHGMLSQM (104 aa)) is the Bromo domain. Residues 1057 to 1070 (DRDYEGLKKPKKTT) are compositionally biased toward basic and acidic residues. The segment at 1057 to 1151 (DRDYEGLKKP…EISSRTESVK (95 aa)) is disordered. Polar residues predominate over residues 1080 to 1090 (DKSQNQDSGQE). Basic and acidic residues-rich tracts occupy residues 1108–1123 (DGDR…KEAS) and 1138–1151 (KSDK…ESVK).

This sequence belongs to the AAA ATPase family.

This Arabidopsis thaliana (Mouse-ear cress) protein is ATPase family AAA domain-containing protein At1g05910.